A 29-amino-acid chain; its full sequence is Dermaseptin-H7 (29 aa).

Leu29 is subject to Leucine amide.

Belongs to the frog skin active peptide (FSAP) family. Dermaseptin subfamily. Expressed by the skin glands.

Its subcellular location is the secreted. Has antibacterial activity against the Gram-negative bacterium E.coli and the Gram-positive bacterium S.aureus. Has antiprotozoal activity against L.amazonensis. Has antifungal activity. Has no hemolytic activity. In Pithecopus hypochondrialis (Orange-legged leaf frog), this protein is Dermaseptin-H7.